The primary structure comprises 208 residues: Small ribosomal subunit protein uS4 (208 aa).

Residues 98–158 (CRLDTVSYRM…EKAKNHLRIK (61 aa)) enclose the S4 RNA-binding domain.

Belongs to the universal ribosomal protein uS4 family. As to quaternary structure, part of the 30S ribosomal subunit. Contacts protein S5. The interaction surface between S4 and S5 is involved in control of translational fidelity.

One of the primary rRNA binding proteins, it binds directly to 16S rRNA where it nucleates assembly of the body of the 30S subunit. In terms of biological role, with S5 and S12 plays an important role in translational accuracy. This is Small ribosomal subunit protein uS4 from Nitrosospira multiformis (strain ATCC 25196 / NCIMB 11849 / C 71).